We begin with the raw amino-acid sequence, 314 residues long: MKKGINRVVLVGTGAVGCSYAYCMINQAVAEEFVLVDVNEAKAEGEAMDLSHAVPFAPAPTRVWKGSYEDCKDADLVVITAGLPQKPGETRLDLVEKNAKIFKQIVRSIMDSGFDGIFLIATNPVDILTYVTWKESGLPKERVIGSGTTLDSARFRYMLGEYFDIGPHNIHAYIIGEHGDTELPVWSHVSVGIQKLQTLLEKDNTYNQEDLDKIFINVRDAAYHIIERKGATYYGIGMSLLRVTKAILNDENSVLTVSAYLEGQYGQKDVYIGVPAVLNRGGVREILEVELSEDEELKFDHSVQVLKETMAPVL.

Residues Val-16, Asp-37, Lys-42, Tyr-68, and 82–83 (GL) contribute to the NAD(+) site. Residues Gln-85, Arg-91, and 123 to 126 (NPVD) each bind substrate. NAD(+) is bound by residues 121–123 (ATN) and Ser-146. 151–154 (DSAR) contributes to the substrate binding site. The beta-D-fructose 1,6-bisphosphate site is built by Arg-156 and His-171. The active-site Proton acceptor is His-178. Phosphotyrosine is present on Tyr-223. Thr-232 is a binding site for substrate.

The protein belongs to the LDH/MDH superfamily. LDH family. Homotetramer.

It is found in the cytoplasm. The catalysed reaction is (S)-lactate + NAD(+) = pyruvate + NADH + H(+). The protein operates within fermentation; pyruvate fermentation to lactate; (S)-lactate from pyruvate: step 1/1. Allosterically activated by fructose 1,6-bisphosphate (FBP). Catalyzes the conversion of lactate to pyruvate. The protein is L-lactate dehydrogenase 1 of Bacillus cereus (strain ATCC 14579 / DSM 31 / CCUG 7414 / JCM 2152 / NBRC 15305 / NCIMB 9373 / NCTC 2599 / NRRL B-3711).